A 203-amino-acid chain; its full sequence is Translation machinery-associated protein 16 (203 aa).

A disordered region spans residues 1 to 39; sequence MPKAPKGKSAGREKKVIHPYSRKAAQITREAHKQEKKEK. Residue Ser9 is modified to ADP-ribosylserine. Positions 29–39 are enriched in basic and acidic residues; that stretch reads REAHKQEKKEK.

Belongs to the TMA16 family. As to quaternary structure, associates with pre-60S ribosomal particles.

The protein localises to the nucleus. Involved in the biogenesis of the 60S ribosomal subunit in the nucleus. The sequence is that of Translation machinery-associated protein 16 (TMA16) from Homo sapiens (Human).